Here is a 185-residue protein sequence, read N- to C-terminus: Probable host range protein 2 (185 aa).

The protein belongs to the poxviridae C7 protein family.

Plays a role for multiplication of the virus in different cell types. In Swinepox virus (strain Kasza) (SWPV), this protein is Probable host range protein 2.